We begin with the raw amino-acid sequence, 206 residues long: MSRIHNDPKVLLTGTTTVGVVTKEGVVLATDRRVTAGYYIAHRKGRKIWKIDNHAAATMSGAVADVQMILNELTHLAMNYRITHQAPVPIKTLANYASVVMFYSRPMIYIAHMIIGGVDNEEGPVLYAVDWYGSFTREERFMSTGSGSPTAFGVLEDGYRDDMSLDDAVKLATRAVRAAMLHDPGSGEGVDVITITKEAGYREVQA.

A propeptide spans 1-14 (MSRIHNDPKVLLTG) (removed in mature form; by autocatalysis). Thr-15 functions as the Nucleophile in the catalytic mechanism.

The protein belongs to the peptidase T1B family. The 20S proteasome core is composed of 14 alpha and 14 beta subunits that assemble into four stacked heptameric rings, resulting in a barrel-shaped structure. The two inner rings, each composed of seven catalytic beta subunits, are sandwiched by two outer rings, each composed of seven alpha subunits. The catalytic chamber with the active sites is on the inside of the barrel. Has a gated structure, the ends of the cylinder being occluded by the N-termini of the alpha-subunits. Is capped at one or both ends by the proteasome regulatory ATPase, PAN.

It localises to the cytoplasm. It carries out the reaction Cleavage of peptide bonds with very broad specificity.. With respect to regulation, the formation of the proteasomal ATPase PAN-20S proteasome complex, via the docking of the C-termini of PAN into the intersubunit pockets in the alpha-rings, triggers opening of the gate for substrate entry. Interconversion between the open-gate and close-gate conformations leads to a dynamic regulation of the 20S proteasome proteolysis activity. Functionally, component of the proteasome core, a large protease complex with broad specificity involved in protein degradation. The protein is Proteasome subunit beta 1 of Caldivirga maquilingensis (strain ATCC 700844 / DSM 13496 / JCM 10307 / IC-167).